An 805-amino-acid chain; its full sequence is Sucrose synthase (805 aa).

The interval 275–752 (MVFNVVILSP…GLQRIEEKYT (478 aa)) is GT-B glycosyltransferase.

This sequence belongs to the glycosyltransferase 1 family. Plant sucrose synthase subfamily.

It carries out the reaction an NDP-alpha-D-glucose + D-fructose = a ribonucleoside 5'-diphosphate + sucrose + H(+). Functionally, sucrose-cleaving enzyme that provides UDP-glucose and fructose for various metabolic pathways. The protein is Sucrose synthase (SS1) of Vigna radiata var. radiata (Mung bean).